A 248-amino-acid chain; its full sequence is Stress-related protein (248 aa).

This sequence belongs to the REF/SRPP family.

The protein is Stress-related protein (SRP) of Vitis riparia (Frost grape).